The following is a 1058-amino-acid chain: COP1-interacting protein 7 (1058 aa).

3 disordered regions span residues L123 to V147, H262 to R281, and M330 to N463. 2 stretches are compositionally biased toward polar residues: residues T126–S136 and H262–T276. The short motif at S340 to K347 is the Nuclear localization signal 1 element. The segment covering S340 to S353 has biased composition (basic residues). The span at D403 to V414 shows a compositional bias: acidic residues. Residues E431–S438 carry the Nuclear localization signal 2 motif. Positions R432 to S446 are enriched in basic residues. Positions H447 to D462 are enriched in basic and acidic residues. S477 carries the phosphoserine modification. Residues A708 to S887 form a disordered region. Basic and acidic residues predominate over residues S757–L773. The Nuclear localization signal 3 signature appears at E764–E771. Low complexity predominate over residues K783–S808. Basic and acidic residues-rich tracts occupy residues K860–S869 and K878–S887. Residues S915, S986, and S992 each carry the phosphoserine modification. Residues S1020 to P1041 form a disordered region. The segment covering E1026 to S1040 has biased composition (basic and acidic residues).

As to quaternary structure, interacts with COP1.

Its subcellular location is the nucleus. Exhibits transcriptional activation activity. Positive regulator of light-regulated genes, probably being a direct downstream target of COP1 for mediating light control of gene expression. The sequence is that of COP1-interacting protein 7 from Arabidopsis thaliana (Mouse-ear cress).